Here is a 304-residue protein sequence, read N- to C-terminus: Undecaprenyl-diphosphatase (304 aa).

8 helical membrane-spanning segments follow: residues 5 to 25, 47 to 67, 72 to 92, 111 to 131, 137 to 157, 209 to 231, 248 to 268, and 283 to 303; these read FLFI…EFVP, GFPE…VVVL, ISSS…LKTS, FGIN…LFHD, LFST…LIVI, ISGL…AMVG, TNWI…LVVI, and FAIY…TKVI.

This sequence belongs to the UppP family.

The protein resides in the cell membrane. It carries out the reaction di-trans,octa-cis-undecaprenyl diphosphate + H2O = di-trans,octa-cis-undecaprenyl phosphate + phosphate + H(+). In terms of biological role, catalyzes the dephosphorylation of undecaprenyl diphosphate (UPP). Confers resistance to bacitracin. This chain is Undecaprenyl-diphosphatase, found in Clostridium perfringens (strain 13 / Type A).